We begin with the raw amino-acid sequence, 361 residues long: Mitogen-activated protein kinase 14B (361 aa).

Residues 25 to 309 enclose the Protein kinase domain; that stretch reads YQNLSPVGSG…ASQALAHPYF (285 aa). ATP is bound by residues 31–39 and Lys-54; that span reads VGSGAYGSV. Residue Asp-151 is the Proton acceptor of the active site. Thr-181 bears the Phosphothreonine; by MAP2K6 mark. The short motif at 181 to 183 is the TXY element; it reads TGY. Tyr-183 carries the post-translational modification Phosphotyrosine; by MAP2K6.

Belongs to the protein kinase superfamily. CMGC Ser/Thr protein kinase family. MAP kinase subfamily. Requires Mg(2+) as cofactor. Post-translationally, dually phosphorylated on Thr-181 and Tyr-183, which activates the enzyme. Predominantly expressed in the ovary. Lower levels present in brain, gill, heart, spleen, kidney, muscle and gut.

The protein localises to the cytoplasm. Its subcellular location is the nucleus. It catalyses the reaction L-seryl-[protein] + ATP = O-phospho-L-seryl-[protein] + ADP + H(+). The enzyme catalyses L-threonyl-[protein] + ATP = O-phospho-L-threonyl-[protein] + ADP + H(+). Activated by threonine and tyrosine phosphorylation by the dual specificity kinase, MKK6. Serine/threonine kinase which acts as an essential component of the MAP kinase signal transduction pathway. Mapk14b is one of the four p38 MAPKs which play an important role in the cascades of cellular responses evoked by extracellular stimuli such as pro-inflammatory cytokines or physical stress leading to direct activation of transcription factors. Accordingly, p38 MAPKs phosphorylate a broad range of proteins and it has been estimated that they may have approximately 200 to 300 substrates each. Some of the targets are downstream kinases which are activated through phosphorylation and further phosphorylate additional targets. In Cyprinus carpio (Common carp), this protein is Mitogen-activated protein kinase 14B (mapk14b).